A 224-amino-acid chain; its full sequence is Putative O-methyltransferase MMAR_4217 (224 aa).

The segment covering 1–11 (MHGTDSSSDTP) has biased composition (polar residues). The interval 1 to 20 (MHGTDSSSDTPGQPAPSRAE) is disordered. S-adenosyl-L-methionine contacts are provided by residues Val-51, Glu-73, 75–76 (GT), Ser-81, Asp-99, and Ile-100. Asp-147 contacts substrate. Asp-149 serves as a coordination point for S-adenosyl-L-methionine.

This sequence belongs to the class I-like SAM-binding methyltransferase superfamily. Cation-dependent O-methyltransferase family.

This chain is Putative O-methyltransferase MMAR_4217, found in Mycobacterium marinum (strain ATCC BAA-535 / M).